The chain runs to 225 residues: MPSRLNVFWLCAAALAALLRCAPAAPVDGAFTDNPAGDTSGEEWETERPADPLIALLKVVLEVIKTHRQEFEAEFHIRYDVLAQYNIPSLPADCPSTNFSMEALLHRLLQGLPVYTALLKYVEKEEPKSQIPSRFRQNSELLKQRITGKMRHAVQVTPLTSSQEQQLLRDLDSSDTFHRKMTAHSILYQLRSFLVDCKNAINKKEKLRESRANRAMTPVTLYYQS.

The signal sequence occupies residues 1-24 (MPSRLNVFWLCAAALAALLRCAPA). Residue N98 is glycosylated (N-linked (GlcNAc...) asparagine).

This sequence belongs to the IL-6 superfamily. In terms of assembly, component of a hexamer of two molecules each of IL6, IL6R and IL6ST; first binds to IL6R to associate with the signaling subunit IL6ST. Expressed in white muscle, skin, spleen, anterior intestine and stomach. Not expressed in brain, gill, head kidney, posterior intestine and adipose tissue.

It localises to the secreted. In terms of biological role, cytokine with a wide variety of biological functions in immunity, tissue regeneration, and metabolism. Binds to IL6R, then the complex associates to the signaling subunit IL6ST/gp130 to trigger the intracellular IL6-signaling pathway. The interaction with the membrane-bound IL6R and IL6ST stimulates 'classic signaling', whereas the binding of IL6 and soluble IL6R to IL6ST stimulates 'trans-signaling'. Alternatively, 'cluster signaling' occurs when membrane-bound IL6:IL6R complexes on transmitter cells activate IL6ST receptors on neighboring receiver cells. This is Interleukin-6 (il6) from Sparus aurata (Gilthead sea bream).